Reading from the N-terminus, the 360-residue chain is Phospho-N-acetylmuramoyl-pentapeptide-transferase (360 aa).

10 consecutive transmembrane segments (helical) span residues 27–47 (IVSL…LIGW), 72–92 (PTMG…MWAY), 94–114 (SNPY…VGFV), 132–152 (WKYF…YCIG), 168–188 (IMPQ…VGTS), 199–219 (GLAI…AWAT), 236–256 (AGEL…FLWF), 263–283 (VFMG…IAVL), 288–308 (FLLV…ILQV), and 338–358 (VIVR…ATLK).

The protein belongs to the glycosyltransferase 4 family. MraY subfamily. Mg(2+) is required as a cofactor.

It is found in the cell inner membrane. It catalyses the reaction UDP-N-acetyl-alpha-D-muramoyl-L-alanyl-gamma-D-glutamyl-meso-2,6-diaminopimeloyl-D-alanyl-D-alanine + di-trans,octa-cis-undecaprenyl phosphate = di-trans,octa-cis-undecaprenyl diphospho-N-acetyl-alpha-D-muramoyl-L-alanyl-D-glutamyl-meso-2,6-diaminopimeloyl-D-alanyl-D-alanine + UMP. The protein operates within cell wall biogenesis; peptidoglycan biosynthesis. Its function is as follows. Catalyzes the initial step of the lipid cycle reactions in the biosynthesis of the cell wall peptidoglycan: transfers peptidoglycan precursor phospho-MurNAc-pentapeptide from UDP-MurNAc-pentapeptide onto the lipid carrier undecaprenyl phosphate, yielding undecaprenyl-pyrophosphoryl-MurNAc-pentapeptide, known as lipid I. The chain is Phospho-N-acetylmuramoyl-pentapeptide-transferase from Edwardsiella ictaluri (strain 93-146).